We begin with the raw amino-acid sequence, 259 residues long: UPF0246 protein PSHAa2558 (259 aa).

This sequence belongs to the UPF0246 family.

The chain is UPF0246 protein PSHAa2558 from Pseudoalteromonas translucida (strain TAC 125).